The primary structure comprises 41 residues: Photosystem II reaction center protein X (41 aa).

The Lumenal segment spans residues 2 to 6 (TITPS). The helical transmembrane segment at 7–29 (LKGFFIGLLSGAVVLGLTFAVLI) threads the bilayer. Topologically, residues 30-41 (AISQIDKVQRSL) are cytoplasmic.

It belongs to the PsbX family. Type 1 subfamily. As to quaternary structure, PSII is composed of 1 copy each of membrane proteins PsbA, PsbB, PsbC, PsbD, PsbE, PsbF, PsbH, PsbI, PsbJ, PsbK, PsbL, PsbM, PsbT, PsbX, PsbY, PsbZ, Psb30/Ycf12, peripheral proteins PsbO, CyanoQ (PsbQ), PsbU, PsbV and a large number of cofactors. It forms dimeric complexes. Part of a photosystem II (PSII) assembly intermediate complex PSII-I; crystallized from a strain deleted of psbJ, it forms monomeric PSII before addition of the oxygen evolving complex. PSII-I includes 3 assembly factors not found in mature PSII (Psb27, Psb28 and Psb34). It depends on PSII binds multiple chlorophylls, carotenoids and specific lipids. as a cofactor.

It localises to the cellular thylakoid membrane. In terms of biological role, involved in the binding and/or turnover of quinones at the Q(B) site of photosystem II (PSII). PSII is a light-driven water plastoquinone oxidoreductase, using light energy to abstract electrons from H(2)O, generating a proton gradient subsequently used for ATP formation. The protein is Photosystem II reaction center protein X of Thermosynechococcus vestitus (strain NIES-2133 / IAM M-273 / BP-1).